The primary structure comprises 314 residues: Aspartate carbamoyltransferase catalytic subunit (314 aa).

Carbamoyl phosphate contacts are provided by arginine 53 and threonine 54. Lysine 82 lines the L-aspartate pocket. Carbamoyl phosphate contacts are provided by arginine 103, histidine 131, and glutamine 134. L-aspartate contacts are provided by arginine 164 and arginine 230. Carbamoyl phosphate is bound by residues leucine 267 and proline 268.

Belongs to the aspartate/ornithine carbamoyltransferase superfamily. ATCase family. In terms of assembly, heterooligomer of catalytic and regulatory chains.

It catalyses the reaction carbamoyl phosphate + L-aspartate = N-carbamoyl-L-aspartate + phosphate + H(+). It participates in pyrimidine metabolism; UMP biosynthesis via de novo pathway; (S)-dihydroorotate from bicarbonate: step 2/3. Functionally, catalyzes the condensation of carbamoyl phosphate and aspartate to form carbamoyl aspartate and inorganic phosphate, the committed step in the de novo pyrimidine nucleotide biosynthesis pathway. The chain is Aspartate carbamoyltransferase catalytic subunit from Methanococcus aeolicus (strain ATCC BAA-1280 / DSM 17508 / OCM 812 / Nankai-3).